A 134-amino-acid chain; its full sequence is Small ribosomal subunit protein uS8 (134 aa).

Belongs to the universal ribosomal protein uS8 family. Part of the 30S ribosomal subunit. Contacts proteins S5 and S12.

One of the primary rRNA binding proteins, it binds directly to 16S rRNA central domain where it helps coordinate assembly of the platform of the 30S subunit. The sequence is that of Small ribosomal subunit protein uS8 from Fervidobacterium nodosum (strain ATCC 35602 / DSM 5306 / Rt17-B1).